Here is a 493-residue protein sequence, read N- to C-terminus: Glutamyl-tRNA(Gln) amidotransferase subunit A (493 aa).

Active-site charge relay system residues include lysine 79 and serine 159. Serine 183 (acyl-ester intermediate) is an active-site residue.

Belongs to the amidase family. GatA subfamily. As to quaternary structure, heterotrimer of A, B and C subunits.

It catalyses the reaction L-glutamyl-tRNA(Gln) + L-glutamine + ATP + H2O = L-glutaminyl-tRNA(Gln) + L-glutamate + ADP + phosphate + H(+). In terms of biological role, allows the formation of correctly charged Gln-tRNA(Gln) through the transamidation of misacylated Glu-tRNA(Gln) in organisms which lack glutaminyl-tRNA synthetase. The reaction takes place in the presence of glutamine and ATP through an activated gamma-phospho-Glu-tRNA(Gln). This Sinorhizobium fredii (strain NBRC 101917 / NGR234) protein is Glutamyl-tRNA(Gln) amidotransferase subunit A.